A 957-amino-acid polypeptide reads, in one-letter code: Dystrophin-related protein 2 (957 aa).

Spectrin repeat units lie at residues 102–179 (DLSG…EELE) and 231–337 (EHLL…QLQD). A WW domain is found at 358-383 (WERAISPNKVPYYINHQAQTTCWDHP). The segment at 605 to 661 (KHQTKCSICRQCPIKGFRYRSLKQFNVDICQTCFLTGRASKGNKLHYPIMEYYTPTT) adopts a ZZ-type; degenerate zinc-finger fold. Zn(2+) contacts are provided by Cys610, Cys613, Cys634, and Cys637. Ser748 carries the post-translational modification Phosphoserine. Residues 876 to 894 (QPPSESDGNGSAGSSLASS) show a composition bias toward low complexity. Positions 876 to 923 (QPPSESDGNGSAGSSLASSPRQSEGSHPREKGQTTPDTEVADDVGSKS) are disordered. Thr910 bears the Phosphothreonine mark.

In terms of assembly, interacts with PRX; this enhances phosphorylation. Identified in a dystroglycan complex that contains at least PRX, DRP2, UTRN, DMD and DAG1. In terms of tissue distribution, detected in quadriceps nerve Schwann cells. Detected in sciatic nerve. Detected in trigeminal nerve Schwann cells (at protein level). Detected in brain and spinal cord.

Its subcellular location is the postsynaptic density. It is found in the cell projection. The protein localises to the dendrite. The protein resides in the perikaryon. It localises to the cell membrane. Required for normal myelination and for normal organization of the cytoplasm and the formation of Cajal bands in myelinating Schwann cells. Required for normal PRX location at appositions between the abaxonal surface of the myelin sheath and the Schwann cell plasma membrane. Possibly involved in membrane-cytoskeleton interactions of the central nervous system. In Mus musculus (Mouse), this protein is Dystrophin-related protein 2 (Drp2).